Reading from the N-terminus, the 366-residue chain is Peptide chain release factor 2 (366 aa).

Gln-251 is modified (N5-methylglutamine).

The protein belongs to the prokaryotic/mitochondrial release factor family. Post-translationally, methylated by PrmC. Methylation increases the termination efficiency of RF2.

The protein localises to the cytoplasm. Peptide chain release factor 2 directs the termination of translation in response to the peptide chain termination codons UGA and UAA. This chain is Peptide chain release factor 2 (prfB), found in Bacillus subtilis (strain 168).